Consider the following 183-residue polypeptide: Dual-action ribosomal maturation protein DarP (183 aa).

Positions 1 to 20 are disordered; sequence MKQKYEDWLNDVPDNQEDDE.

This sequence belongs to the DarP family.

The protein localises to the cytoplasm. In terms of biological role, member of a network of 50S ribosomal subunit biogenesis factors which assembles along the 30S-50S interface, preventing incorrect 23S rRNA structures from forming. Promotes peptidyl transferase center (PTC) maturation. The polypeptide is Dual-action ribosomal maturation protein DarP (Pectobacterium carotovorum subsp. carotovorum (strain PC1)).